A 169-amino-acid polypeptide reads, in one-letter code: MICOS complex subunit MIC19 (169 aa).

Glycine 2 carries the N-myristoyl glycine lipid modification. The CHCH domain maps to 123-165 (ENVCQDNENEIVRCLQENPGRVLKCAPLTEAFEKCVGEFRQQV). 2 short sequence motifs (cx9C motif) span residues 126–136 (CQDNENEIVRC) and 147–157 (CAPLTEAFEKC). 2 cysteine pairs are disulfide-bonded: cysteine 126/cysteine 157 and cysteine 136/cysteine 147.

The protein belongs to the MICOS complex subunit Mic19 family. Metazoan Mic19 subfamily. Component of the mitochondrial contact site and cristae organizing system (MICOS) complex.

The protein localises to the mitochondrion inner membrane. In terms of biological role, plays a role in maintaining mitochondrial morphology. May act as a component of the MICOS complex, a large protein complex of the mitochondria. This chain is MICOS complex subunit MIC19, found in Caenorhabditis elegans.